The primary structure comprises 302 residues: uncharacterized protein (302 aa).

N-linked (GlcNAc...) asparagine glycosylation is found at asparagine 32, asparagine 39, and asparagine 94. In terms of domain architecture, ShKT spans cysteine 80–cysteine 115. Disulfide bonds link cysteine 80–cysteine 115, cysteine 87–cysteine 108, and cysteine 98–cysteine 112. The N-linked (GlcNAc...) asparagine glycan is linked to asparagine 181.

This is an uncharacterized protein from Caenorhabditis elegans.